The sequence spans 333 residues: Fructose-1,6-bisphosphatase class 1 (333 aa).

Positions 92, 113, 115, and 116 each coordinate Mg(2+). Substrate contacts are provided by residues 116–119, Asn-209, Tyr-242, and Lys-272; that span reads DGSS. Position 278 (Glu-278) interacts with Mg(2+).

This sequence belongs to the FBPase class 1 family. In terms of assembly, homotetramer. The cofactor is Mg(2+).

The protein resides in the cytoplasm. It carries out the reaction beta-D-fructose 1,6-bisphosphate + H2O = beta-D-fructose 6-phosphate + phosphate. Its pathway is carbohydrate biosynthesis; Calvin cycle. This is Fructose-1,6-bisphosphatase class 1 from Chlorobium phaeobacteroides (strain BS1).